The primary structure comprises 409 residues: Elongation factor Tu, chloroplastic (409 aa).

One can recognise a tr-type G domain in the interval 10–214 (KPHINIGTIG…AVDAYIPTPE (205 aa)). The segment at 19 to 26 (GHVDHGKT) is G1. 19-26 (GHVDHGKT) serves as a coordination point for GTP. Thr26 contacts Mg(2+). The G2 stretch occupies residues 60-64 (GITIN). The tract at residues 81–84 (DCPG) is G3. GTP is bound by residues 81–85 (DCPGH) and 136–139 (NKQD). The tract at residues 136–139 (NKQD) is G4. The tract at residues 174–176 (SRL) is G5.

Belongs to the TRAFAC class translation factor GTPase superfamily. Classic translation factor GTPase family. EF-Tu/EF-1A subfamily.

Its subcellular location is the plastid. The protein resides in the chloroplast. It catalyses the reaction GTP + H2O = GDP + phosphate + H(+). In terms of biological role, GTP hydrolase that promotes the GTP-dependent binding of aminoacyl-tRNA to the A-site of ribosomes during protein biosynthesis. This chain is Elongation factor Tu, chloroplastic (tufA), found in Stephanocyclus meneghinianus (Diatom).